The primary structure comprises 455 residues: Oxysterols receptor LXR-beta (455 aa).

Over residues 1–10 the composition is skewed to polar residues; that stretch reads MSTPTTNSVD. Positions 1–53 are disordered; sequence MSTPTTNSVDTPLPGNGPSTPSSSPGGKEDGPEPCPGGADPDVPSTDGADSAS. Positions 1 to 80 are transactivation AF-1; required for ligand-independent transactivation function; it reads MSTPTTNSVD…GPAPKMLGDE (80 aa). Residues 14–26 are compositionally biased toward low complexity; sequence PGNGPSTPSSSPG. The segment at residues 79 to 156 is a DNA-binding region (nuclear receptor); that stretch reads DELCQVCGDT…AGMREQCVLS (78 aa). 2 NR C4-type zinc fingers span residues 82 to 102 and 120 to 144; these read CQVCGDTASGFHYNVLSCEGC and CRGGGTCQMDAFMRRKCQQCRLRKC. Positions 164-210 are disordered; that stretch reads KIRKQQQQQQQQSSPTGPGVSSSSPASGPGASPGGSDGGGQGSGEGE. Over residues 168–193 the composition is skewed to low complexity; it reads QQQQQQQQSSPTGPGVSSSSPASGPG. Positions 194–210 are enriched in gly residues; that stretch reads ASPGGSDGGGQGSGEGE. The segment at 214 to 455 is transactivation AF-2; required for ligand-dependent transactivation function; mediates interaction with CCAR2; sequence LTAAQELMIQ…LLSEIWDVHE (242 aa). Residues 217 to 455 enclose the NR LBD domain; it reads AQELMIQQLV…LLSEIWDVHE (239 aa). Glycyl lysine isopeptide (Lys-Gly) (interchain with G-Cter in SUMO2) cross-links involve residues Lys404 and Lys442.

The protein belongs to the nuclear hormone receptor family. NR1 subfamily. As to quaternary structure, forms a heterodimer with RXR. Interacts with CCAR2 (via N-terminus) in a ligand-independent manner. Interacts (when sumoylated) with GPS2; interaction with GPS2 onto hepatic acute phase protein promoters prevents N-Cor corepressor complex dissociation. Interacts with ABCA12 and ABCA1; this interaction is required for ABCA1 localization to the cell surface and is necessary for its normal activity and stability. In terms of processing, sumoylated by SUMO2 at Lys-404 and Lys-442 during the hepatic acute phase response, leading to promote interaction with GPS2 and prevent N-Cor corepressor complex dissociation.

The protein resides in the nucleus. Functionally, nuclear receptor that exhibits a ligand-dependent transcriptional activation activity. Binds preferentially to double-stranded oligonucleotide direct repeats having the consensus half-site sequence 5'-AGGTCA-3' and 4-nt spacing (DR-4). Regulates cholesterol uptake through MYLIP-dependent ubiquitination of LDLR, VLDLR and LRP8; DLDLR and LRP8. Interplays functionally with RORA for the regulation of genes involved in liver metabolism. Induces LPCAT3-dependent phospholipid remodeling in endoplasmic reticulum (ER) membranes of hepatocytes, driving SREBF1 processing and lipogenesis. Via LPCAT3, triggers the incorporation of arachidonate into phosphatidylcholines of ER membranes, increasing membrane dynamics and enabling triacylglycerols transfer to nascent very low-density lipoprotein (VLDL) particles. Via LPCAT3 also counteracts lipid-induced ER stress response and inflammation, likely by modulating SRC kinase membrane compartmentalization and limiting the synthesis of lipid inflammatory mediators. Plays an anti-inflammatory role during the hepatic acute phase response by acting as a corepressor: inhibits the hepatic acute phase response by preventing dissociation of the N-Cor corepressor complex. In Bos taurus (Bovine), this protein is Oxysterols receptor LXR-beta (NR1H2).